The primary structure comprises 396 residues: Acetate kinase (396 aa).

Asparagine 8 lines the Mg(2+) pocket. Lysine 15 serves as a coordination point for ATP. Position 89 (arginine 89) interacts with substrate. Catalysis depends on aspartate 146, which acts as the Proton donor/acceptor. ATP-binding positions include 206–210 (HIGNG), 283–285 (DMR), and 331–335 (GVGEN). Glutamate 383 contacts Mg(2+).

Belongs to the acetokinase family. In terms of assembly, homodimer. Mg(2+) is required as a cofactor. It depends on Mn(2+) as a cofactor.

It localises to the cytoplasm. It catalyses the reaction acetate + ATP = acetyl phosphate + ADP. It functions in the pathway metabolic intermediate biosynthesis; acetyl-CoA biosynthesis; acetyl-CoA from acetate: step 1/2. Functionally, catalyzes the formation of acetyl phosphate from acetate and ATP. Can also catalyze the reverse reaction. The chain is Acetate kinase from Streptococcus pneumoniae (strain JJA).